We begin with the raw amino-acid sequence, 340 residues long: MPVLEEKKTADHFHHIGVLGAGSWGTALAAVASYKGAVTLWGRKREIIDAINQRHINPDYLPDIIIPRTIHATDELNDLSSASALLVAIPAQKMRSVLRQIPNDSRPLILCAKGIEAESGLLMSQLAADIFPHRPIAVLSGPTFASEVARHLPTAVTLAAKEKDIRAALMQRLAIPTFRPYASSDVIGADVGGAVKNVLAIACGVVAGAKLGNNARAAVISRGFAEMNRFGIALGAKEETLTGLSGLGDLVLTCSSELSRNFTFGKKLGEGYSYEEQQKKRAVTTEGVFTAPVLQRVANKLKVEMPLVSAICDLIEGKSVNSVLERLLSRPLKGEYSISV.

NADPH-binding residues include Ser23, Trp24, Arg43, Lys44, and Lys113. The sn-glycerol 3-phosphate site is built by Lys113, Gly141, and Thr143. Residue Ala145 coordinates NADPH. The sn-glycerol 3-phosphate site is built by Lys196, Asp249, Ser259, Arg260, and Asn261. Catalysis depends on Lys196, which acts as the Proton acceptor. Arg260 is an NADPH binding site. Position 286 (Glu286) interacts with NADPH.

This sequence belongs to the NAD-dependent glycerol-3-phosphate dehydrogenase family.

It localises to the cytoplasm. The catalysed reaction is sn-glycerol 3-phosphate + NAD(+) = dihydroxyacetone phosphate + NADH + H(+). It carries out the reaction sn-glycerol 3-phosphate + NADP(+) = dihydroxyacetone phosphate + NADPH + H(+). Its pathway is membrane lipid metabolism; glycerophospholipid metabolism. Its function is as follows. Catalyzes the reduction of the glycolytic intermediate dihydroxyacetone phosphate (DHAP) to sn-glycerol 3-phosphate (G3P), the key precursor for phospholipid synthesis. In Zymomonas mobilis subsp. mobilis (strain ATCC 31821 / ZM4 / CP4), this protein is Glycerol-3-phosphate dehydrogenase [NAD(P)+].